The primary structure comprises 212 residues: Pyridoxine/pyridoxamine 5'-phosphate oxidase (212 aa).

The disordered stretch occupies residues 1 to 20; sequence MSDSAMEPQNPLTSGDFTAA. FMN is bound by residues 59 to 64, 74 to 75, Lys-81, and Gln-103; these read RMVLLK and YT. Residue Lys-64 coordinates substrate. Substrate-binding residues include Tyr-121, Arg-125, and Ser-129. FMN contacts are provided by residues 138 to 139 and Trp-183; that span reads QS. Residue 189 to 191 participates in substrate binding; sequence RLH. Arg-193 serves as a coordination point for FMN.

This sequence belongs to the pyridoxamine 5'-phosphate oxidase family. As to quaternary structure, homodimer. Requires FMN as cofactor.

The catalysed reaction is pyridoxamine 5'-phosphate + O2 + H2O = pyridoxal 5'-phosphate + H2O2 + NH4(+). The enzyme catalyses pyridoxine 5'-phosphate + O2 = pyridoxal 5'-phosphate + H2O2. Its pathway is cofactor metabolism; pyridoxal 5'-phosphate salvage; pyridoxal 5'-phosphate from pyridoxamine 5'-phosphate: step 1/1. The protein operates within cofactor metabolism; pyridoxal 5'-phosphate salvage; pyridoxal 5'-phosphate from pyridoxine 5'-phosphate: step 1/1. Catalyzes the oxidation of either pyridoxine 5'-phosphate (PNP) or pyridoxamine 5'-phosphate (PMP) into pyridoxal 5'-phosphate (PLP). This Azorhizobium caulinodans (strain ATCC 43989 / DSM 5975 / JCM 20966 / LMG 6465 / NBRC 14845 / NCIMB 13405 / ORS 571) protein is Pyridoxine/pyridoxamine 5'-phosphate oxidase.